A 179-amino-acid polypeptide reads, in one-letter code: Peptidyl-tRNA hydrolase (179 aa).

Residue Tyr-14 participates in tRNA binding. His-19 acts as the Proton acceptor in catalysis. Residues Tyr-60, Asn-62, and Asn-108 each contribute to the tRNA site.

This sequence belongs to the PTH family. Monomer.

The protein resides in the cytoplasm. The enzyme catalyses an N-acyl-L-alpha-aminoacyl-tRNA + H2O = an N-acyl-L-amino acid + a tRNA + H(+). Hydrolyzes ribosome-free peptidyl-tRNAs (with 1 or more amino acids incorporated), which drop off the ribosome during protein synthesis, or as a result of ribosome stalling. Its function is as follows. Catalyzes the release of premature peptidyl moieties from peptidyl-tRNA molecules trapped in stalled 50S ribosomal subunits, and thus maintains levels of free tRNAs and 50S ribosomes. The protein is Peptidyl-tRNA hydrolase of Mycoplasma mobile (strain ATCC 43663 / 163K / NCTC 11711) (Mesomycoplasma mobile).